A 379-amino-acid polypeptide reads, in one-letter code: 1-deoxy-D-xylulose 5-phosphate reductoisomerase (379 aa).

NADPH-binding residues include Thr10, Gly11, Ser12, Ile13, Arg38, Asn39, and Asn121. Lys122 serves as a coordination point for 1-deoxy-D-xylulose 5-phosphate. An NADPH-binding site is contributed by Glu123. Asp147 is a Mn(2+) binding site. 1-deoxy-D-xylulose 5-phosphate is bound by residues Ser148, Glu149, Ser173, and His196. Glu149 serves as a coordination point for Mn(2+). Gly202 is an NADPH binding site. 1-deoxy-D-xylulose 5-phosphate contacts are provided by Ser209, Asn214, Lys215, and Glu218. Position 218 (Glu218) interacts with Mn(2+).

The protein belongs to the DXR family. It depends on Mg(2+) as a cofactor. Requires Mn(2+) as cofactor.

It carries out the reaction 2-C-methyl-D-erythritol 4-phosphate + NADP(+) = 1-deoxy-D-xylulose 5-phosphate + NADPH + H(+). It functions in the pathway isoprenoid biosynthesis; isopentenyl diphosphate biosynthesis via DXP pathway; isopentenyl diphosphate from 1-deoxy-D-xylulose 5-phosphate: step 1/6. Functionally, catalyzes the NADPH-dependent rearrangement and reduction of 1-deoxy-D-xylulose-5-phosphate (DXP) to 2-C-methyl-D-erythritol 4-phosphate (MEP). This chain is 1-deoxy-D-xylulose 5-phosphate reductoisomerase, found in Chlamydia trachomatis serovar A (strain ATCC VR-571B / DSM 19440 / HAR-13).